A 536-amino-acid polypeptide reads, in one-letter code: Phosphoenolpyruvate carboxykinase (ATP) (536 aa).

Residues Arg-61, Tyr-195, and Lys-201 each coordinate substrate. ATP-binding positions include Lys-201, His-220, and 236–244 (GLSGTGKTT). 2 residues coordinate Mn(2+): Lys-201 and His-220. Residue Asp-257 coordinates Mn(2+). The ATP site is built by Glu-285, Arg-322, and Thr-447. Arg-322 lines the substrate pocket.

This sequence belongs to the phosphoenolpyruvate carboxykinase (ATP) family. Requires Mn(2+) as cofactor.

It is found in the cytoplasm. It catalyses the reaction oxaloacetate + ATP = phosphoenolpyruvate + ADP + CO2. It functions in the pathway carbohydrate biosynthesis; gluconeogenesis. Its function is as follows. Involved in the gluconeogenesis. Catalyzes the conversion of oxaloacetate (OAA) to phosphoenolpyruvate (PEP) through direct phosphoryl transfer between the nucleoside triphosphate and OAA. The polypeptide is Phosphoenolpyruvate carboxykinase (ATP) (Rhizobium johnstonii (strain DSM 114642 / LMG 32736 / 3841) (Rhizobium leguminosarum bv. viciae)).